The chain runs to 344 residues: Calcium homeostasis modulator protein 3 (344 aa).

The Cytoplasmic portion of the chain corresponds to 1–20 (MDKFRMLFQHFQSSSESVMN). Residues 9–36 (QHFQSSSESVMNGICLLLAAVTVKLYSS) form a central pore region. A helical transmembrane segment spans residues 21-36 (GICLLLAAVTVKLYSS). The Extracellular segment spans residues 37-48 (FDFNCPCLVHYN). Cystine bridges form between cysteine 41-cysteine 126 and cysteine 43-cysteine 157. A helical transmembrane segment spans residues 49–71 (ALYGLGLLLTPPLALFLCGLLAN). The Cytoplasmic segment spans residues 72–98 (RQSVVMVEEWRRPAGHRRKDPGIIRYM). Residue cysteine 99 is the site of S-palmitoyl cysteine attachment. The chain crosses the membrane as a helical span at residues 99-124 (CSSVLQRALAAPLVWILLALLDGKCF). The Extracellular portion of the chain corresponds to 125–176 (VCAFSSSVDPEKFLDFANMTPSQVQLFLAKVPCKEDELVRDSPARKAVSRYL). Residue asparagine 142 is glycosylated (N-linked (GlcNAc...) asparagine). The chain crosses the membrane as a helical span at residues 177–202 (RCLSQAIGWSVTLLLIIAAFLARCLR). Residues cysteine 200 and cysteine 204 are each lipidated (S-palmitoyl cysteine). Residues 203–344 (PCFDQTVFLQ…GTRLSQHTDV (142 aa)) lie on the Cytoplasmic side of the membrane.

Belongs to the CALHM family. As to quaternary structure, associates with CALHM1 as a pore-forming subunit in a hetero-hexameric channel complex. Post-translationally, N-glycosylated. Palmitoylated by ZDHHC3 and ZDHHC15. Palmitoylation positively regulates CALHM1:CALHM3 channel conductance. In terms of tissue distribution, specifically expressed in circumvallate taste bud cells.

Its subcellular location is the basolateral cell membrane. The catalysed reaction is ATP(in) = ATP(out). It catalyses the reaction Ca(2+)(in) = Ca(2+)(out). It carries out the reaction Na(+)(in) = Na(+)(out). The enzyme catalyses K(+)(in) = K(+)(out). The catalysed reaction is chloride(in) = chloride(out). In terms of biological role, pore-forming subunit of gustatory voltage-gated ion channels required for sensory perception of sweet, bitter and umami tastes. With CALHM1 forms a fast-activating voltage-gated ATP-release channel in type II taste bud cells, ATP acting as a neurotransmitter to activate afferent neural gustatory pathways. Acts both as a voltage-gated and calcium-activated ion channel: mediates neuronal excitability in response to membrane depolarization and low extracellular Ca(2+) concentration. Has poor ion selectivity and forms a wide pore (around 14 Angstroms) that mediates permeation of small ions including Ca(2+), Na(+), K(+) and Cl(-), as well as larger ions such as ATP(4-). In Homo sapiens (Human), this protein is Calcium homeostasis modulator protein 3.